A 447-amino-acid chain; its full sequence is Bifunctional protein GlmU (447 aa).

Residues 1–225 (MLTVAILAAG…NGELQGINNR (225 aa)) are pyrophosphorylase. Residues 7–10 (LAAG), Lys-21, Gln-73, and 78–79 (GT) contribute to the UDP-N-acetyl-alpha-D-glucosamine site. A Mg(2+)-binding site is contributed by Asp-103. Residues Gly-140, Glu-154, Asn-169, and Asn-223 each contribute to the UDP-N-acetyl-alpha-D-glucosamine site. Asn-223 lines the Mg(2+) pocket. Residues 226–246 (VQLSKCEETIQNLIKEKHMLG) are linker. The segment at 247-447 (GVTFINPASC…QVNIENWKKN (201 aa)) is N-acetyltransferase. Residues Arg-328 and Lys-346 each contribute to the UDP-N-acetyl-alpha-D-glucosamine site. The Proton acceptor role is filled by His-358. Tyr-361 and Asn-372 together coordinate UDP-N-acetyl-alpha-D-glucosamine. Positions 375, 418, and 435 each coordinate acetyl-CoA.

It in the N-terminal section; belongs to the N-acetylglucosamine-1-phosphate uridyltransferase family. In the C-terminal section; belongs to the transferase hexapeptide repeat family. Homotrimer. Mg(2+) is required as a cofactor.

It localises to the cytoplasm. It catalyses the reaction alpha-D-glucosamine 1-phosphate + acetyl-CoA = N-acetyl-alpha-D-glucosamine 1-phosphate + CoA + H(+). It carries out the reaction N-acetyl-alpha-D-glucosamine 1-phosphate + UTP + H(+) = UDP-N-acetyl-alpha-D-glucosamine + diphosphate. The protein operates within nucleotide-sugar biosynthesis; UDP-N-acetyl-alpha-D-glucosamine biosynthesis; N-acetyl-alpha-D-glucosamine 1-phosphate from alpha-D-glucosamine 6-phosphate (route II): step 2/2. It functions in the pathway nucleotide-sugar biosynthesis; UDP-N-acetyl-alpha-D-glucosamine biosynthesis; UDP-N-acetyl-alpha-D-glucosamine from N-acetyl-alpha-D-glucosamine 1-phosphate: step 1/1. Its pathway is bacterial outer membrane biogenesis; LPS lipid A biosynthesis. Functionally, catalyzes the last two sequential reactions in the de novo biosynthetic pathway for UDP-N-acetylglucosamine (UDP-GlcNAc). The C-terminal domain catalyzes the transfer of acetyl group from acetyl coenzyme A to glucosamine-1-phosphate (GlcN-1-P) to produce N-acetylglucosamine-1-phosphate (GlcNAc-1-P), which is converted into UDP-GlcNAc by the transfer of uridine 5-monophosphate (from uridine 5-triphosphate), a reaction catalyzed by the N-terminal domain. The chain is Bifunctional protein GlmU from Prochlorococcus marinus (strain MIT 9515).